Here is a 64-residue protein sequence, read N- to C-terminus: Large ribosomal subunit protein uL30 (64 aa).

The protein belongs to the universal ribosomal protein uL30 family. Part of the 50S ribosomal subunit.

This Beijerinckia indica subsp. indica (strain ATCC 9039 / DSM 1715 / NCIMB 8712) protein is Large ribosomal subunit protein uL30.